Consider the following 173-residue polypeptide: Photosystem I assembly protein Ycf3 (173 aa).

TPR repeat units follow at residues 35–68 (AFAY…EDDP), 72–105 (SYIL…NPRM), and 120–153 (GEKA…APNN).

The protein belongs to the Ycf3 family.

It localises to the cellular thylakoid membrane. In terms of biological role, essential for the assembly of the photosystem I (PSI) complex. May act as a chaperone-like factor to guide the assembly of the PSI subunits. The protein is Photosystem I assembly protein Ycf3 of Trichodesmium erythraeum (strain IMS101).